Reading from the N-terminus, the 264-residue chain is 5'-nucleotidase SurE (264 aa).

A divalent metal cation is bound by residues Asp-8, Asp-9, Ser-41, and Asn-98.

The protein belongs to the SurE nucleotidase family. Requires a divalent metal cation as cofactor.

The protein localises to the cytoplasm. It catalyses the reaction a ribonucleoside 5'-phosphate + H2O = a ribonucleoside + phosphate. Its function is as follows. Nucleotidase that shows phosphatase activity on nucleoside 5'-monophosphates. The chain is 5'-nucleotidase SurE from Carboxydothermus hydrogenoformans (strain ATCC BAA-161 / DSM 6008 / Z-2901).